The sequence spans 281 residues: Ribosomal protein L11 methyltransferase (281 aa).

S-adenosyl-L-methionine is bound by residues threonine 133, glycine 154, aspartate 175, and asparagine 216.

Belongs to the methyltransferase superfamily. PrmA family.

Its subcellular location is the cytoplasm. The enzyme catalyses L-lysyl-[protein] + 3 S-adenosyl-L-methionine = N(6),N(6),N(6)-trimethyl-L-lysyl-[protein] + 3 S-adenosyl-L-homocysteine + 3 H(+). Methylates ribosomal protein L11. The polypeptide is Ribosomal protein L11 methyltransferase (Campylobacter jejuni subsp. jejuni serotype O:23/36 (strain 81-176)).